We begin with the raw amino-acid sequence, 448 residues long: Deoxyguanosinetriphosphate triphosphohydrolase-like protein (448 aa).

The interval 1–26 (MQINSSWQERFLADPPREKDHRPPFR) is disordered. Positions 11 to 26 (FLADPPREKDHRPPFR) are enriched in basic and acidic residues. The region spanning 59-272 (RLTHSLEVAQ…MELADDIAYA (214 aa)) is the HD domain.

This sequence belongs to the dGTPase family. Type 2 subfamily.

The sequence is that of Deoxyguanosinetriphosphate triphosphohydrolase-like protein from Histophilus somni (strain 129Pt) (Haemophilus somnus).